A 264-amino-acid polypeptide reads, in one-letter code: Zinc finger protein CG30 (264 aa).

Residues 8–63 (CNICFSVAEIKNYFLQPIDRLTIIPVLELDTCKHQLCSMCIRKIRKRKKVPCPLCR) form an RING-type zinc finger.

Its subcellular location is the host nucleus. Functionally, plays a role in the proper expression of late and very late genes. This chain is Zinc finger protein CG30 (CG30), found in Autographa californica nuclear polyhedrosis virus (AcMNPV).